A 266-amino-acid polypeptide reads, in one-letter code: Interleukin-1 beta (266 aa).

Residues 1 to 114 constitute a propeptide that is removed on maturation; the sequence is MAAVPELSSE…DTWDEEYESD (114 aa).

Belongs to the IL-1 family. Monomer. In its precursor form, weakly interacts with full-length MEFV; the mature cytokine does not interact at all. Interacts with integrins ITGAV:ITGBV and ITGA5:ITGB1; integrin-binding is required for IL1B signaling. Interacts with cargo receptor TMED10; the interaction is direct and is required for the secretion of IL1B mature form. Interacts with HSP90AB1; the interaction facilitates cargo translocation into the ERGIC. Interacts with HSP90B1; the interaction facilitates cargo translocation into the ERGIC.

The protein resides in the cytoplasm. It localises to the cytosol. Its subcellular location is the secreted. It is found in the lysosome. The protein localises to the extracellular exosome. In terms of biological role, potent pro-inflammatory cytokine. Initially discovered as the major endogenous pyrogen, induces prostaglandin synthesis, neutrophil influx and activation, T-cell activation and cytokine production, B-cell activation and antibody production, and fibroblast proliferation and collagen production. Promotes Th17 differentiation of T-cells. Synergizes with IL12/interleukin-12 to induce IFNG synthesis from T-helper 1 (Th1) cells. Plays a role in angiogenesis by inducing VEGF production synergistically with TNF and IL6. Involved in transduction of inflammation downstream of pyroptosis: its mature form is specifically released in the extracellular milieu by passing through the gasdermin-D (GSDMD) pore. This is Interleukin-1 beta (IL1B) from Cavia porcellus (Guinea pig).